Here is a 462-residue protein sequence, read N- to C-terminus: Myrosinase-binding protein 1 (462 aa).

Residues 1-23 (MSTGGPQKLEAQGGKEGKEWDDG) are disordered. Jacalin-type lectin domains are found at residues 6 to 148 (PQKL…YFAP), 157 to 300 (PNKV…YFAP), and 310 to 453 (TKKL…HIVP). Over residues 13 to 23 (GGKEGKEWDDG) the composition is skewed to basic and acidic residues.

The protein belongs to the jacalin lectin family. In terms of tissue distribution, expressed exclusively in flowers, in male and female organs, petals and pedicels. Not detected in pollen grains or sepals.

In Arabidopsis thaliana (Mouse-ear cress), this protein is Myrosinase-binding protein 1 (MBP1).